The chain runs to 199 residues: uncharacterized protein (199 aa).

The next 4 membrane-spanning stretches (helical) occupy residues 35 to 55 (CELA…IFYD), 57 to 77 (FVIF…YLEF), 94 to 114 (LSAA…IFFG), and 131 to 151 (YYGC…ASFA).

It is found in the membrane. This is an uncharacterized protein from Caenorhabditis elegans.